Here is an 803-residue protein sequence, read N- to C-terminus: Xylosyltransferase sqv-6 (803 aa).

At 3–13 (VVGGVNTNYRH) the chain is on the cytoplasmic side. The chain crosses the membrane as a helical; Signal-anchor for type II membrane protein span at residues 14–34 (YALVIVLFFFLNVYLLYSAQN). Residues 35–803 (SVQIRKDEGE…GWDEEARILR (769 aa)) are Lumenal-facing. A disulfide bridge connects residues Cys-63 and Cys-91. 3 N-linked (GlcNAc...) asparagine glycosylation sites follow: Asn-95, Asn-175, and Asn-224. 3 disulfides stabilise this stretch: Cys-107–Cys-446, Cys-465–Cys-479, and Cys-467–Cys-477. Positions 115–209 (IDQRIGCFLD…FNAVEIFRTD (95 aa)) constitute a WSC domain. Residues Asp-265 and 294 to 296 (TIW) contribute to the UDP-alpha-D-xylose site. N-linked (GlcNAc...) asparagine glycosylation is present at Asn-326. 399–400 (DW) provides a ligand contact to UDP-alpha-D-xylose. UDP-alpha-D-xylose-binding positions include Ser-480 and 506 to 507 (RK). Asn-615 and Asn-718 each carry an N-linked (GlcNAc...) asparagine glycan. Cys-769 and Cys-775 are joined by a disulfide.

The protein belongs to the glycosyltransferase 14 family. XylT subfamily. Requires a divalent metal cation as cofactor.

It is found in the endoplasmic reticulum membrane. Its subcellular location is the golgi apparatus membrane. The enzyme catalyses UDP-alpha-D-xylose + L-seryl-[protein] = 3-O-(beta-D-xylosyl)-L-seryl-[protein] + UDP + H(+). The protein operates within glycan metabolism; chondroitin sulfate biosynthesis. It participates in glycan metabolism; heparan sulfate biosynthesis. Its function is as follows. Catalyzes the first step in biosynthesis of glycosaminoglycan. Transfers D-xylose from UDP-D-xylose to specific serine residues of the core protein. The sequence is that of Xylosyltransferase sqv-6 from Caenorhabditis briggsae.